Here is a 493-residue protein sequence, read N- to C-terminus: Glutamyl-tRNA(Gln) amidotransferase subunit A (493 aa).

Residues Lys79 and Ser159 each act as charge relay system in the active site. Ser183 serves as the catalytic Acyl-ester intermediate.

Belongs to the amidase family. GatA subfamily. As to quaternary structure, heterotrimer of A, B and C subunits.

The catalysed reaction is L-glutamyl-tRNA(Gln) + L-glutamine + ATP + H2O = L-glutaminyl-tRNA(Gln) + L-glutamate + ADP + phosphate + H(+). Its function is as follows. Allows the formation of correctly charged Gln-tRNA(Gln) through the transamidation of misacylated Glu-tRNA(Gln) in organisms which lack glutaminyl-tRNA synthetase. The reaction takes place in the presence of glutamine and ATP through an activated gamma-phospho-Glu-tRNA(Gln). In Allorhizobium ampelinum (strain ATCC BAA-846 / DSM 112012 / S4) (Agrobacterium vitis (strain S4)), this protein is Glutamyl-tRNA(Gln) amidotransferase subunit A.